A 501-amino-acid polypeptide reads, in one-letter code: Aldehyde dehydrogenase family 2 member C4 (501 aa).

245 to 250 contributes to the NAD(+) binding site; it reads GSTDVG. E268 serves as the catalytic Proton acceptor. C302 acts as the Nucleophile in catalysis.

This sequence belongs to the aldehyde dehydrogenase family. In terms of assembly, homotetramer.

Its subcellular location is the cytoplasm. The protein localises to the cytosol. The enzyme catalyses an aldehyde + NAD(+) + H2O = a carboxylate + NADH + 2 H(+). Functionally, involved in ferulic acid and sinapic acid biosynthesis by oxidation of conyferylaldehyde and sinapaldehyde, respectively. Can oxidize L-lactaldehyde. Possesses activity on acetaldehyde and glycolaldehyde in vitro. In Arabidopsis thaliana (Mouse-ear cress), this protein is Aldehyde dehydrogenase family 2 member C4 (ALDH2C4).